The chain runs to 212 residues: Thymidylate kinase (212 aa).

11-18 (GGEGVGKS) contributes to the ATP binding site.

Belongs to the thymidylate kinase family.

The enzyme catalyses dTMP + ATP = dTDP + ADP. In terms of biological role, phosphorylation of dTMP to form dTDP in both de novo and salvage pathways of dTTP synthesis. The protein is Thymidylate kinase of Chromohalobacter salexigens (strain ATCC BAA-138 / DSM 3043 / CIP 106854 / NCIMB 13768 / 1H11).